Consider the following 148-residue polypeptide: Hemoglobin subunit beta-B (148 aa).

Residues 3–148 enclose the Globin domain; the sequence is DWTDAERAAI…VVSALGRQYH (146 aa). Residues His-64 and His-93 each coordinate heme b.

This sequence belongs to the globin family. In terms of assembly, heterotetramer of two alpha chains and two beta chains. As to expression, red blood cells.

Involved in oxygen transport from gills to the various peripheral tissues. This Seriola quinqueradiata (Five-ray yellowtail) protein is Hemoglobin subunit beta-B (hbb2).